Consider the following 251-residue polypeptide: Hydroxyacylglutathione hydrolase (251 aa).

Zn(2+) is bound by residues histidine 53, histidine 55, aspartate 57, histidine 58, histidine 110, aspartate 127, and histidine 165.

It belongs to the metallo-beta-lactamase superfamily. Glyoxalase II family. Monomer. Requires Zn(2+) as cofactor.

The enzyme catalyses an S-(2-hydroxyacyl)glutathione + H2O = a 2-hydroxy carboxylate + glutathione + H(+). Its pathway is secondary metabolite metabolism; methylglyoxal degradation; (R)-lactate from methylglyoxal: step 2/2. Thiolesterase that catalyzes the hydrolysis of S-D-lactoyl-glutathione to form glutathione and D-lactic acid. The sequence is that of Hydroxyacylglutathione hydrolase from Shigella boydii serotype 18 (strain CDC 3083-94 / BS512).